A 129-amino-acid polypeptide reads, in one-letter code: Protein Wnt-6 (129 aa).

Intrachain disulfides connect C3–C17, C5–C12, C75–C106, C91–C101, and C128–C129. The O-palmitoleoyl serine; by PORCN moiety is linked to residue S9. The N-linked (GlcNAc...) asparagine glycan is linked to N92.

It belongs to the Wnt family. In terms of processing, palmitoleoylation is required for efficient binding to frizzled receptors. Depalmitoleoylation leads to Wnt signaling pathway inhibition. As to expression, at tailbud: dorsal, punctate; in adult: brain and heart.

The protein localises to the secreted. It is found in the extracellular space. Its subcellular location is the extracellular matrix. Its function is as follows. Ligand for members of the frizzled family of seven transmembrane receptors. Probable developmental protein. May be a signaling molecule which affects the development of discrete regions of tissues. Is likely to signal over only few cell diameters. This chain is Protein Wnt-6 (wnt6), found in Xenopus laevis (African clawed frog).